An 862-amino-acid polypeptide reads, in one-letter code: Interleukin-12 receptor subunit beta-2 (862 aa).

The signal sequence occupies residues 1–23 (MAHTFRGCSLAFMFIITWLLIKA). Topologically, residues 24–622 (KIDACKRGDV…REFCLQGKAN (599 aa)) are extracellular. Asn-48, Asn-129, Asn-166, Asn-195, and Asn-271 each carry an N-linked (GlcNAc...) asparagine glycan. 5 consecutive Fibronectin type-III domains span residues 126 to 221 (QPQN…FLDI), 226 to 319 (PPWD…TPEE), 320 to 419 (EPTG…LCEA), 423 to 520 (APRQ…KHKA), and 521 to 620 (PLSG…LQGK). The WSXWS motif motif lies at 305 to 309 (WSDWS). N-linked (GlcNAc...) asparagine glycans are attached at residues Asn-347, Asn-376, and Asn-480. Residues 623–643 (WMAFVAPSICIAIIMVGIFST) traverse the membrane as a helical segment. Over 644–862 (HYFQQKVFVL…LKMRCDSLML (219 aa)) the chain is Cytoplasmic. Positions 662–670 (CSREIPDPA) match the Box 1 motif motif. Positions 725–755 (NWPQREKGIQGHQASEKDMMHSASSPPPPRA) are disordered. The segment covering 728–744 (QREKGIQGHQASEKDMM) has biased composition (basic and acidic residues). Residues 796–801 (THDGYL) are required for STAT4 binding. Tyr-800 carries the phosphotyrosine modification.

It belongs to the type I cytokine receptor family. Type 2 subfamily. As to quaternary structure, heterodimer/heterooligomer; disulfide-linked. The functional high affinity IL12 receptor is composed of I12RB1 and IL12RB2. Il12RB2 binds JAK2 (via its N-terminal) through a membrane-proximal region of the cytoplasmic domain. Interaction, in vitro and in vivo, with SOCS3 (via its SH2 domain) inhibits the STAT4-mediated activation. Binds STAT4 through a membrane-distal C-terminal region. On IL12 binding, phosphorylated on C-terminal tyrosine residues by JAK2. Phosphorylation on Tyr-800 is required for STAT4 binding and activation, and for SOCS3 binding. In terms of tissue distribution, isoform 2 is expressed at similar levels in both naive and activated T-cells.

It is found in the membrane. Its function is as follows. Receptor for interleukin-12. This subunit is the signaling component coupling to the JAK2/STAT4 pathway. Promotes the proliferation of T-cells as well as NK cells. Induces the promotion of T-cells towards the Th1 phenotype by strongly enhancing IFN-gamma production. This chain is Interleukin-12 receptor subunit beta-2 (IL12RB2), found in Homo sapiens (Human).